We begin with the raw amino-acid sequence, 147 residues long: MCSPAGPVSVDHSARLILLAWRQTEQGAVVVAFKVRIHCRHEPILRPLAAVHLGQNHGPHQHLAPCFVLALLLLFPCPHPLNFGIDSRSLFFELGQPIRRLVAPLNHLDTPLLMCCLVGYHGGTAAAIPTLLCRGGRTYRFLFEKLA.

This is an uncharacterized protein from Escherichia coli.